The primary structure comprises 203 residues: Outer-membrane lipoprotein LolB (203 aa).

Positions 1–18 are cleaved as a signal peptide; that stretch reads MTLRSFLIFFLSSLILAG. Cys-19 carries the N-palmitoyl cysteine lipid modification. Cys-19 carries the S-diacylglycerol cysteine lipid modification.

It belongs to the LolB family. Monomer.

It localises to the cell outer membrane. In terms of biological role, plays a critical role in the incorporation of lipoproteins in the outer membrane after they are released by the LolA protein. This chain is Outer-membrane lipoprotein LolB, found in Vibrio parahaemolyticus serotype O3:K6 (strain RIMD 2210633).